The chain runs to 555 residues: CTP synthase (555 aa).

The tract at residues 1-267 is amidoligase domain; sequence MAKYIFVTGG…GNYLTLRLGL (267 aa). Ser13 serves as a coordination point for CTP. Residue Ser13 participates in UTP binding. 14 to 19 contributes to the ATP binding site; that stretch reads SVGKGI. L-glutamine is bound at residue Tyr54. An ATP-binding site is contributed by Asp71. Positions 71 and 141 each coordinate Mg(2+). CTP-binding positions include 148–150, 188–193, and Lys224; these read DIE and KTKPTQ. UTP-binding positions include 188–193 and Lys224; that span reads KTKPTQ. One can recognise a Glutamine amidotransferase type-1 domain in the interval 292–535; that stretch reads AIALVGKYVE…IAAAAQTFRE (244 aa). Gly354 contacts L-glutamine. The Nucleophile; for glutamine hydrolysis role is filled by Cys381. L-glutamine contacts are provided by residues 382–385, Glu406, and Arg463; that span reads LGMQ. Catalysis depends on residues His508 and Glu510.

The protein belongs to the CTP synthase family. As to quaternary structure, homotetramer.

It carries out the reaction UTP + L-glutamine + ATP + H2O = CTP + L-glutamate + ADP + phosphate + 2 H(+). The catalysed reaction is L-glutamine + H2O = L-glutamate + NH4(+). It catalyses the reaction UTP + NH4(+) + ATP = CTP + ADP + phosphate + 2 H(+). Its pathway is pyrimidine metabolism; CTP biosynthesis via de novo pathway; CTP from UDP: step 2/2. With respect to regulation, allosterically activated by GTP, when glutamine is the substrate; GTP has no effect on the reaction when ammonia is the substrate. The allosteric effector GTP functions by stabilizing the protein conformation that binds the tetrahedral intermediate(s) formed during glutamine hydrolysis. Inhibited by the product CTP, via allosteric rather than competitive inhibition. In terms of biological role, catalyzes the ATP-dependent amination of UTP to CTP with either L-glutamine or ammonia as the source of nitrogen. Regulates intracellular CTP levels through interactions with the four ribonucleotide triphosphates. The chain is CTP synthase from Roseiflexus castenholzii (strain DSM 13941 / HLO8).